The primary structure comprises 207 residues: MEKVKAWLIKYKWWIVAAIGGLAAFLLLKNRGGGSGGGGEYMVGSGPVYQQAGSGAVDNTMALAALQANTQLSAQNAQLQAQMDASRLQLETQLNIETLAADNAHYSTQSQLQLGMAQVDLSKYLGDLQSTTSTALAGMQSDTAKYQSNIQLQAENIRANTSLAEIDAQKYIVGKQADIAKYQAKTERRGQDYGFALGLLNFGGKFF.

Residues 13-28 (WWIVAAIGGLAAFLLL) traverse the membrane as a helical segment. The stretch at 64-95 (AALQANTQLSAQNAQLQAQMDASRLQLETQLN) forms a coiled coil.

It localises to the virion membrane. Its function is as follows. Component of the phage ejection machinery. Pilot protein for the formation of the tube that conducts the genome into the target cell. Probably involved in penetration of the bacterial outer membrane and for making the peptidoglycan layer accessible to the viral transglycosylase. Essential for viral infectivity. The protein is Infectivity protein P11 (XI) of Enterobacteria phage PRD1 (Bacteriophage PRD1).